The following is a 475-amino-acid chain: Glutamyl-tRNA(Gln) amidotransferase subunit A (475 aa).

Active-site charge relay system residues include Lys69 and Ser144. Residue Ser168 is the Acyl-ester intermediate of the active site.

The protein belongs to the amidase family. GatA subfamily. As to quaternary structure, heterotrimer of A, B and C subunits.

It carries out the reaction L-glutamyl-tRNA(Gln) + L-glutamine + ATP + H2O = L-glutaminyl-tRNA(Gln) + L-glutamate + ADP + phosphate + H(+). In terms of biological role, allows the formation of correctly charged Gln-tRNA(Gln) through the transamidation of misacylated Glu-tRNA(Gln) in organisms which lack glutaminyl-tRNA synthetase. The reaction takes place in the presence of glutamine and ATP through an activated gamma-phospho-Glu-tRNA(Gln). In Methanococcoides burtonii (strain DSM 6242 / NBRC 107633 / OCM 468 / ACE-M), this protein is Glutamyl-tRNA(Gln) amidotransferase subunit A.